Here is a 1197-residue protein sequence, read N- to C-terminus: Protein timeless homolog (1197 aa).

The required for homodimerization and for interaction with CRY1 and CHEK1 stretch occupies residues 1-309; the sequence is MDLYMMNCEL…GLHNLQNYSS (309 aa). Residue Ser281 is modified to Phosphoserine. 2 disordered regions span residues 647–674 and 943–1002; these read STPL…EELQ and RKKL…SAEN. A compositionally biased stretch (acidic residues) spans 656-673; it reads PEEGDAEEEEEEEEEEEL. The tract at residues 810-949 is DNA-binding domain; that stretch reads SHRAPLWSPE…KKRRKKLAPS (140 aa). The span at 963 to 985 shows a compositional bias: acidic residues; the sequence is QEDPEEEDEHLPEDESEDEESEE. Residues 986–999 are compositionally biased toward low complexity; that stretch reads GLPSGQGQGSSSLS. Residues 997–1095 form an interaction with PARP1 region; that stretch reads SLSAENLGES…TQLRRVAASL (99 aa). 2 positions are modified to phosphoserine: Ser1071 and Ser1084. Residues 1079–1197 form a required for nuclear localization region; it reads IPAKLSSTQL…KRFQIEDEDD (119 aa). Thr1086 is subject to Phosphothreonine. The interval 1088 to 1197 is disordered; the sequence is LRRVAASLSQ…KRFQIEDEDD (110 aa). 2 stretches are compositionally biased toward acidic residues: residues 1099–1109 and 1143–1153; these read ENEEEREEEPE and TEEEATGEEEW. Phosphoserine is present on Ser1165.

The protein belongs to the timeless family. As to quaternary structure, monomer. Homodimer or homomultimer. Component of the circadian core oscillator, which includes the CRY proteins, CLOCK or NPAS2, ARTNL/BMAL1 or ARTNL2/BMAL2, CSKN1D and/or CSNK1E, TIMELESS, and the PER proteins. Interacts directly with PER2; the interaction with PER2 is via its second PAS domain. Interacts directly with PER1 and PER3. Interacts with CRY1. Interacts with CRY2. Interacts with CHEK1, ATR and ATRIP. Interacts with CLSPN. Interacts (via N-terminus) with TIPIN. The TIMELESS-TIPIN heterodimer binds preferably to guanine-rich quadruplex-forming (G4) DNA structures. Associates with the MCM2-7 complex. Interacts with DNA polymerases alpha, delta and epsilon. Interacts with DDX11; this interaction increases recruitment of both proteins onto chromatin in response to replication stress induction by hydroxyurea. Interacts with PARP1; interaction is direct and independent of poly-ADP-ribose. In terms of tissue distribution, predominantly and robustly expressed in proliferative organs (spleen, thymus, intestine and testis) compared to those more differentiated such as kidney and liver (at protein level). Expressed in all tissues examined including brain, heart, lung, liver, skeletal muscle, kidney, placenta, pancreas, spleen, thymus and testis. Strongly expressed in the suprachiasmatic nucleus (SCN) and pars tuberalis, moderately in the cingulate cortex, pyrimidal cell layer of the piriform cortex, periventricular part of the caudate putamen, and granular layer of the cerebellum, and weakly in the cerebral cortex, gyrus dentatus, hippocampus and thalamic nuclei. In embryonic kidney, expression is highest in regions of active ureteric bud cell branching.

The protein localises to the nucleus. It localises to the chromosome. Functionally, plays an important role in the control of DNA replication, maintenance of replication fork stability, maintenance of genome stability throughout normal DNA replication, DNA repair and in the regulation of the circadian clock. Required to stabilize replication forks during DNA replication by forming a complex with TIPIN: this complex regulates DNA replication processes under both normal and stress conditions, stabilizes replication forks and influences both CHEK1 phosphorylation and the intra-S phase checkpoint in response to genotoxic stress. During DNA replication, inhibits the CMG complex ATPase activity and activates DNA polymerases catalytic activities, coupling DNA unwinding and DNA synthesis. TIMELESS promotes TIPIN nuclear localization. Plays a role in maintaining processive DNA replication past genomic guanine-rich DNA sequences that form G-quadruplex (G4) structures, possibly together with DDX1. Involved in cell survival after DNA damage or replication stress by promoting DNA repair. In response to double-strand breaks (DSBs), accumulates at DNA damage sites and promotes homologous recombination repair via its interaction with PARP1. May be specifically required for the ATR-CHEK1 pathway in the replication checkpoint induced by hydroxyurea or ultraviolet light. Involved in the determination of period length and in the DNA damage-dependent phase advancing of the circadian clock. Negatively regulates CLOCK|NPAS2-ARTNL/BMAL1|ARTNL2/BMAL2-induced transactivation of PER1 possibly via translocation of PER1 into the nucleus. May also play an important role in epithelial cell morphogenesis and formation of branching tubules. This Mus musculus (Mouse) protein is Protein timeless homolog.